Reading from the N-terminus, the 943-residue chain is Receptor-like kinase TMK3 (943 aa).

The signal sequence occupies residues 1–24 (MSNSHLGTLCFIISLLGLANFSLS). Residues 25–482 (QTGLDDSTMQ…ETSKKSSNVK (458 aa)) are Extracellular-facing. An N-linked (GlcNAc...) asparagine glycan is attached at Asn-41. A disulfide bond links Cys-54 and Cys-61. 10 LRR repeats span residues 64–88 (SNRVTKIQLKQKGIRGTLPTNLQSL), 89–111 (SELVILELFLNRISGPIPDLSGL), 112–134 (SRLQTLNLHDNLFTSVPKNLFSG), 136–160 (SSLQEMYLENNPFDPWVIPDTVKEA), 162–183 (SLQNLTLSNCSIIGKIPDFFGS), 186–210 (LPSLTNLKLSQNGLEGELPMSFAGT), 212–232 (IQSLFLNGQKLNGSISVLGNM), 233–254 (TSLVEVSLQGNQFSGPIPDLSG), 255–279 (LVSLRVFNVRENQLTGVVPQSLVSL), and 281–301 (SLTTVNLTNNYLQGPTPLFGK). Residues Asn-165 and Asn-170 are each glycosylated (N-linked (GlcNAc...) asparagine). Residues Asn-223 and Asn-231 are each glycosylated (N-linked (GlcNAc...) asparagine). The N-linked (GlcNAc...) asparagine glycan is linked to Asn-286. Disulfide bonds link Cys-315–Cys-323 and Cys-353–Cys-361. LRR repeat units lie at residues 363 to 386 (GGNITVVNMRKQDLSGTISPSLAK), 387 to 410 (LTSLETINLADNKLSGHIPDELTT), and 411 to 438 (LSKLRLLDVSNNDFYGIPPKFRDTVTLV). A glycan (N-linked (GlcNAc...) asparagine) is linked at Asn-365. The disordered stretch occupies residues 441–476 (GNANMGKNGPNKTSDAPGASPGSKPSGGSDGSETSK). A glycan (N-linked (GlcNAc...) asparagine) is linked at Asn-451. The span at 454–467 (SDAPGASPGSKPSG) shows a compositional bias: low complexity. The helical transmembrane segment at 483–503 (IIVPVVGGVVGALCLVGLGVC) threads the bilayer. At 504-943 (LYAKKRKRPA…ADSFTSVDGR (440 aa)) the chain is on the cytoplasmic side. Residues 514–534 (RVQSPSSNMVIHPHHSGDNDD) are disordered. A Protein kinase domain is found at 585–866 (FSEENILGRG…AHIVNVLSSL (282 aa)). ATP contacts are provided by residues 591–599 (LGRGGFGTV) and Lys-613. Asp-714 acts as the Proton acceptor in catalysis. A disordered region spans residues 904–943 (QTADDSGSSSSAYGSKDNTQTSIPTRPSGFADSFTSVDGR). A compositionally biased stretch (low complexity) spans 906–918 (ADDSGSSSSAYGS). Positions 919–928 (KDNTQTSIPT) are enriched in polar residues.

This sequence belongs to the protein kinase superfamily. Ser/Thr protein kinase family. As to expression, expressed in roots, leaves, stems, siliques and flowers.

It localises to the membrane. The catalysed reaction is L-seryl-[protein] + ATP = O-phospho-L-seryl-[protein] + ADP + H(+). It carries out the reaction L-threonyl-[protein] + ATP = O-phospho-L-threonyl-[protein] + ADP + H(+). Involved in auxin signal transduction and cell expansion and proliferation regulation. The polypeptide is Receptor-like kinase TMK3 (Arabidopsis thaliana (Mouse-ear cress)).